Consider the following 374-residue polypeptide: Cell division protein C (374 aa).

One can recognise an MIT domain in the interval 11 to 73 (ARKYAINAVK…YKRRIEVLKE (63 aa)). 144-151 (GPPGCGKT) contacts ATP.

It belongs to the AAA ATPase family. As to quaternary structure, interacts with CdvB.

Its subcellular location is the cytoplasm. The protein localises to the nucleoid. Part of a cell division machinery. The CdvA, CdvB and CdvC proteins polymerize between segregating nucleoids and persist throughout cell division, forming a successively smaller structure during constriction. The protein is Cell division protein C of Sulfolobus acidocaldarius (strain ATCC 33909 / DSM 639 / JCM 8929 / NBRC 15157 / NCIMB 11770).